A 193-amino-acid polypeptide reads, in one-letter code: dCTP deaminase (193 aa).

DCTP contacts are provided by residues 110–115 (RSSLAR), Asp128, 136–138 (VLE), Tyr171, Lys178, and Gln182. Residue Glu138 is the Proton donor/acceptor of the active site. The disordered stretch occupies residues 169–193 (RPYNRREDAKYRNQQGAVASRIDKD).

This sequence belongs to the dCTP deaminase family. As to quaternary structure, homotrimer.

The enzyme catalyses dCTP + H2O + H(+) = dUTP + NH4(+). It participates in pyrimidine metabolism; dUMP biosynthesis; dUMP from dCTP (dUTP route): step 1/2. Its function is as follows. Catalyzes the deamination of dCTP to dUTP. This Escherichia coli O1:K1 / APEC protein is dCTP deaminase.